The following is a 93-amino-acid chain: Small ribosomal subunit protein bS16 (93 aa).

The protein belongs to the bacterial ribosomal protein bS16 family.

In Dictyoglomus turgidum (strain DSM 6724 / Z-1310), this protein is Small ribosomal subunit protein bS16.